Here is a 157-residue protein sequence, read N- to C-terminus: S-ribosylhomocysteine lyase (157 aa).

Histidine 53, histidine 57, and cysteine 124 together coordinate Fe cation.

It belongs to the LuxS family. Homodimer. Requires Fe cation as cofactor.

The catalysed reaction is S-(5-deoxy-D-ribos-5-yl)-L-homocysteine = (S)-4,5-dihydroxypentane-2,3-dione + L-homocysteine. Involved in the synthesis of autoinducer 2 (AI-2) which is secreted by bacteria and is used to communicate both the cell density and the metabolic potential of the environment. The regulation of gene expression in response to changes in cell density is called quorum sensing. Catalyzes the transformation of S-ribosylhomocysteine (RHC) to homocysteine (HC) and 4,5-dihydroxy-2,3-pentadione (DPD). The chain is S-ribosylhomocysteine lyase from Borreliella afzelii (strain PKo) (Borrelia afzelii).